Here is a 465-residue protein sequence, read N- to C-terminus: Dihydrolipoyllysine-residue acetyltransferase component 5 of pyruvate dehydrogenase complex, chloroplastic (465 aa).

A chloroplast-targeting transit peptide spans 1 to 31; sequence MSRLLQTPFLPSVSLPTKTRSSVTGFRVKPR. The Lipoyl-binding domain maps to 39–114; the sequence is IREIFMPALS…PVGSAIALLA (76 aa). Residue Lys-80 is modified to N6-lipoyllysine. Residues 123–148 are disordered; that stretch reads AKAKASGGGGGGDSKAPPASPPTAAV. Positions 136 to 148 are enriched in low complexity; that stretch reads SKAPPASPPTAAV. Positions 184–221 constitute a Peripheral subunit-binding (PSBD) domain; that stretch reads VASPYAKKLAKELKVELAGLVGSGPMGRIVAKDVEAVA. His-438 is a catalytic residue.

The protein belongs to the 2-oxoacid dehydrogenase family. (R)-lipoate is required as a cofactor.

It is found in the plastid. Its subcellular location is the chloroplast stroma. The catalysed reaction is N(6)-[(R)-dihydrolipoyl]-L-lysyl-[protein] + acetyl-CoA = N(6)-[(R)-S(8)-acetyldihydrolipoyl]-L-lysyl-[protein] + CoA. The pyruvate dehydrogenase complex catalyzes the overall conversion of pyruvate to acetyl-CoA and CO(2). It contains multiple copies of three enzymatic components: pyruvate dehydrogenase (E1), dihydrolipoamide acetyltransferase (E2) and lipoamide dehydrogenase (E3). In Arabidopsis thaliana (Mouse-ear cress), this protein is Dihydrolipoyllysine-residue acetyltransferase component 5 of pyruvate dehydrogenase complex, chloroplastic (EMB3003).